The primary structure comprises 419 residues: UDP-N-acetylglucosamine 1-carboxyvinyltransferase (419 aa).

A phosphoenolpyruvate-binding site is contributed by 22–23 (KN). Residue arginine 92 participates in UDP-N-acetyl-alpha-D-glucosamine binding. Cysteine 116 (proton donor) is an active-site residue. Residue cysteine 116 is modified to 2-(S-cysteinyl)pyruvic acid O-phosphothioketal. Residues aspartate 306 and isoleucine 328 each coordinate UDP-N-acetyl-alpha-D-glucosamine.

The protein belongs to the EPSP synthase family. MurA subfamily.

The protein localises to the cytoplasm. The enzyme catalyses phosphoenolpyruvate + UDP-N-acetyl-alpha-D-glucosamine = UDP-N-acetyl-3-O-(1-carboxyvinyl)-alpha-D-glucosamine + phosphate. The protein operates within cell wall biogenesis; peptidoglycan biosynthesis. Its function is as follows. Cell wall formation. Adds enolpyruvyl to UDP-N-acetylglucosamine. This is UDP-N-acetylglucosamine 1-carboxyvinyltransferase from Psychromonas ingrahamii (strain DSM 17664 / CCUG 51855 / 37).